Reading from the N-terminus, the 264-residue chain is Thymidylate synthase (264 aa).

Arg-21 contacts dUMP. His-51 provides a ligand contact to (6R)-5,10-methylene-5,6,7,8-tetrahydrofolate. 126 to 127 is a binding site for dUMP; that stretch reads RR. The active-site Nucleophile is Cys-146. Residues 166-169, Asn-177, and 207-209 contribute to the dUMP site; these read RSAD and HLY. Residue Asp-169 coordinates (6R)-5,10-methylene-5,6,7,8-tetrahydrofolate. Residue Ala-263 participates in (6R)-5,10-methylene-5,6,7,8-tetrahydrofolate binding.

Belongs to the thymidylate synthase family. Bacterial-type ThyA subfamily. In terms of assembly, homodimer.

It is found in the cytoplasm. It carries out the reaction dUMP + (6R)-5,10-methylene-5,6,7,8-tetrahydrofolate = 7,8-dihydrofolate + dTMP. The protein operates within pyrimidine metabolism; dTTP biosynthesis. Its function is as follows. Catalyzes the reductive methylation of 2'-deoxyuridine-5'-monophosphate (dUMP) to 2'-deoxythymidine-5'-monophosphate (dTMP) while utilizing 5,10-methylenetetrahydrofolate (mTHF) as the methyl donor and reductant in the reaction, yielding dihydrofolate (DHF) as a by-product. This enzymatic reaction provides an intracellular de novo source of dTMP, an essential precursor for DNA biosynthesis. In Dechloromonas aromatica (strain RCB), this protein is Thymidylate synthase.